A 661-amino-acid chain; its full sequence is 72 kDa type IV collagenase (661 aa).

A signal peptide spans 1 to 30 (MTEARVSRGALAALLRALCALGCLLGRAAA). Residues 31–110 (APSPIIKFPG…PRCGNPDVAN (80 aa)) constitute a propeptide, activation peptide. The short motif at 101–108 (PRCGNPDV) is the Cysteine switch element. A Zn(2+)-binding site is contributed by cysteine 103. The interval 111–222 (YNFFPRKPKW…LRTLGEGQVV (112 aa)) is collagenase-like 1. Ca(2+)-binding residues include aspartate 135 and aspartate 169. The Zn(2+) site is built by histidine 179 and aspartate 181. Positions 186 and 187 each coordinate Ca(2+). Position 194 (histidine 194) interacts with Zn(2+). Ca(2+)-binding residues include glycine 201, glycine 203, and aspartate 205. Histidine 207 provides a ligand contact to Zn(2+). The Ca(2+) site is built by aspartate 209, aspartate 210, and glutamate 212. A collagen-binding region spans residues 223–397 (RVKYGNADGE…WGFCPDQGYS (175 aa)). Fibronectin type-II domains are found at residues 229–277 (ADGE…FCPH), 287–335 (ADGQ…FCPE), and 345–393 (SEGA…FCPD). Intrachain disulfides connect cysteine 234/cysteine 260, cysteine 248/cysteine 275, cysteine 292/cysteine 318, cysteine 306/cysteine 333, cysteine 350/cysteine 376, and cysteine 364/cysteine 391. Residues 398 to 466 (LFLVAAHEFG…GPTPTLGPVT (69 aa)) are collagenase-like 2. Residue histidine 404 participates in Zn(2+) binding. Residue glutamate 405 is part of the active site. Positions 408 and 414 each coordinate Zn(2+). Residues 415–661 (SQDPGALMAP…GSIKSDWLGC (247 aa)) form a required for inhibitor TIMP2 binding region. Hemopexin repeat units lie at residues 469-517 (LCKQ…WPEL), 518-564 (PEKI…GLPP), 566-614 (VQKV…WNAI), and 615-661 (PDNL…WLGC). Cysteines 470 and 661 form a disulfide. 3 residues coordinate Ca(2+): aspartate 477, aspartate 522, and aspartate 570. N-linked (GlcNAc...) asparagine glycosylation is present at asparagine 574. Position 619 (aspartate 619) interacts with Ca(2+). The N-linked (GlcNAc...) asparagine glycan is linked to asparagine 643.

Belongs to the peptidase M10A family. As to quaternary structure, interacts (via the C-terminal hemopexin-like domains-containing region) with the integrin alpha-V/beta-3; the interaction promotes vascular invasion in angiogenic vessels and melamoma cells. Interacts (via the C-terminal PEX domain) with TIMP2 (via the C-terminal); the interaction inhibits the degradation activity. Interacts with GSK3B. Ca(2+) serves as cofactor. Zn(2+) is required as a cofactor. In terms of processing, phosphorylation on multiple sites modulates enzymatic activity. Phosphorylated by PKC in vitro. The propeptide is processed by MMP14 (MT-MMP1) and MMP16 (MT-MMP3). Autocatalytic cleavage in the C-terminal produces the anti-angiogenic peptide, PEX. This processing appears to be facilitated by binding integrinv/beta3.

Its subcellular location is the secreted. It is found in the extracellular space. It localises to the extracellular matrix. The protein resides in the membrane. The protein localises to the nucleus. The enzyme catalyses Cleavage of gelatin type I and collagen types IV, V, VII, X. Cleaves the collagen-like sequence Pro-Gln-Gly-|-Ile-Ala-Gly-Gln.. Functionally, ubiquitinous metalloproteinase that is involved in diverse functions such as remodeling of the vasculature, angiogenesis, tissue repair, tumor invasion, inflammation, and atherosclerotic plaque rupture. As well as degrading extracellular matrix proteins, can also act on several nonmatrix proteins such as big endothelial 1 and beta-type CGRP promoting vasoconstriction. Also cleaves KISS at a Gly-|-Leu bond. Appears to have a role in myocardial cell death pathways. Contributes to myocardial oxidative stress by regulating the activity of GSK3beta. Cleaves GSK3beta in vitro. Involved in the formation of the fibrovascular tissues. In terms of biological role, PEX, the C-terminal non-catalytic fragment of MMP2, possesses anti-angiogenic and anti-tumor properties and inhibits cell migration and cell adhesion to FGF2 and vitronectin. Ligand for integrin alpha-v/beta-3 on the surface of blood vessels. This is 72 kDa type IV collagenase (MMP2) from Bos taurus (Bovine).